The sequence spans 184 residues: UPF0149 protein Avin_47340 (184 aa).

Belongs to the UPF0149 family.

This Azotobacter vinelandii (strain DJ / ATCC BAA-1303) protein is UPF0149 protein Avin_47340.